A 229-amino-acid chain; its full sequence is MRSSDITFVLLSVVATVRSHATFQELWINSVDQVGSCVRLPPTNSPITDLTSTDLRCNVGGTVGVSGVCSVAAGGNVTVEMHQQPGDRSCANEAIGGAHYGPVILYMSKVSNAATDTGSGSWFKVDQEGYDQTLNANCGKRSFTIPSTLAPGDYLLRAEVIALHVAGSVGGAQLYMSCFQLRVTGSGSKNPTGVLFPGAYSATDPGILINIYQTINNYTIPGPTTVFTG.

The N-terminal stretch at 1–19 (MRSSDITFVLLSVVATVRS) is a signal peptide. His-20 serves as a coordination point for Cu(2+). Cys-57 and Cys-178 are oxidised to a cystine. The N-linked (GlcNAc...) asparagine glycan is linked to Asn-76. Residue His-99 coordinates Cu(2+). His-164 and Gln-173 together coordinate O2. Tyr-175 serves as a coordination point for Cu(2+). Residue Asn-217 is glycosylated (N-linked (GlcNAc...) asparagine).

It belongs to the polysaccharide monooxygenase AA9 family. Cu(2+) is required as a cofactor.

It localises to the secreted. The catalysed reaction is [(1-&gt;4)-beta-D-glucosyl]n+m + reduced acceptor + O2 = 4-dehydro-beta-D-glucosyl-[(1-&gt;4)-beta-D-glucosyl]n-1 + [(1-&gt;4)-beta-D-glucosyl]m + acceptor + H2O.. Functionally, lytic polysaccharide monooxygenase (LPMO) that depolymerizes crystalline and amorphous polysaccharides via the oxidation of scissile alpha- or beta-(1-4)-glycosidic bonds, yielding C1 and C4 oxidation products. Catalysis by LPMOs requires the reduction of the active-site copper from Cu(II) to Cu(I) by a reducing agent and H(2)O(2) or O(2) as a cosubstrate. This is AA9 family lytic polysaccharide monooxygenase E from Botryotinia fuckeliana (strain B05.10) (Noble rot fungus).